Consider the following 356-residue polypeptide: GTPase Obg (356 aa).

The 159-residue stretch at 2–160 folds into the Obg domain; sequence ESFVDEVAIE…KFLRLSLKLL (159 aa). The OBG-type G domain occupies 161 to 329; that stretch reads ADVGIVGLPN…LLENMDEVFF (169 aa). Residues 167–174, 192–196, 215–218, 282–285, and 310–312 each bind GTP; these read GLPNAGKS, FTTLS, DIPG, NKID, and SAD. S174 and T194 together coordinate Mg(2+).

This sequence belongs to the TRAFAC class OBG-HflX-like GTPase superfamily. OBG GTPase family. As to quaternary structure, monomer. Mg(2+) is required as a cofactor.

The protein localises to the cytoplasm. Functionally, an essential GTPase which binds GTP, GDP and possibly (p)ppGpp with moderate affinity, with high nucleotide exchange rates and a fairly low GTP hydrolysis rate. Plays a role in control of the cell cycle, stress response, ribosome biogenesis and in those bacteria that undergo differentiation, in morphogenesis control. This chain is GTPase Obg, found in Leptospira interrogans serogroup Icterohaemorrhagiae serovar copenhageni (strain Fiocruz L1-130).